The sequence spans 433 residues: Homogentisate 1,2-dioxygenase (433 aa).

His288 (proton acceptor) is an active-site residue. Fe cation contacts are provided by His331 and Glu337. Homogentisate-binding residues include Tyr346 and His367. His367 lines the Fe cation pocket.

Belongs to the homogentisate dioxygenase family. As to quaternary structure, hexamer; dimer of trimers. Requires Fe cation as cofactor.

The catalysed reaction is homogentisate + O2 = 4-maleylacetoacetate + H(+). It functions in the pathway amino-acid degradation; L-phenylalanine degradation; acetoacetate and fumarate from L-phenylalanine: step 4/6. Involved in the catabolism of homogentisate (2,5-dihydroxyphenylacetate or 2,5-OH-PhAc), a central intermediate in the degradation of phenylalanine and tyrosine. Catalyzes the oxidative ring cleavage of the aromatic ring of homogentisate to yield maleylacetoacetate. In Pseudomonas entomophila (strain L48), this protein is Homogentisate 1,2-dioxygenase.